The following is a 1102-amino-acid chain: MVLLNRRKIQPKEIGQSADSFSETPWVIKESSERINDYDSDLKKLDFYKRDIFTCEISGKDGLSYFKALKSEEQHREKVRYLLPKELRKAIANFANFSPIRKVGHLVESAFQRFSNRFFIGDTVCLKTIQKNALITYKEGEPNLVESPTIENNVTLFLVKDVFQSNGMMESEKGEISAPKLSLYLITECLNRESKGAALIVGQNEIKRPESHFSKFIIACFLNEILIKVSNKEHAPWRVKQEYIERYDVNPKCSPNMIDYLPDRMNSSSSELYTPLTIPPESDVEPADWKETSETSETSETSLSKIKAIDDEISVSFDHIYDNVNSLAYNDLKGTVDDKELPFTGPSIPFENISYLDSSLEYKNIDQKWFKECSQFPTERLLVVYQFLSFFGRFIGLSHFNFDQFLTTIKCTSPEALVDEYVKINFLKTYNSKGSFTNEKPRNEIYNQVTSSNVSQREKANVFNADESQRIPSNFTRNQKMRKFITDKSTEFVMYSIFKGKPLKNDDMEFQSYEKVNILYIDIVCSLMCLMTDNEPDWNCNLMDNWTEEKRKEEGNKTEIDIAIEKCLNYGDTSWVKLLHNKNFSNGNWLICLLGILQQNTHMIAYSDVAKCITKKILPLSMNFVNLGDELWDNFRKRLSIKDKIDVLWVLVDFASNFSSYIKELVDKVPKLCNGIRLKLDSAKKEYIKLKRQLKTLTKNRVKLHSNVSMNRYGSDECKGKVNALKVKIAYLMEDIAFLEAKLIQSDIKRLEILGKDRNGNRYYWMDSNGSSSAISEKNEELYNCCFLWVQGPSEADINFCLDVDVESLKKWELLAKAKGTAYATKEVFSIFRSTDGSYYQIAQGENFMIINSNGILMRPTIPAFIDKKIISETPEKLLLSHHQWAFFNDIEDIHMLVDRLDDLRENEGQLKKALTSKMDRIEVSYKQQFKIKRRIECDETFKKNHKLLKNNEFTFPELKRIETTCTSNGQHFSNMEKISKKLSRTKNDLVLEAILKDVAHLGECERALLKKQQNLIYPLNFHFEQLRTIDLEFIVETKRKRQEDILTKLLNHQRYKHISHVSGYGISSQRVDKAAHLDVQGILEEIECQLISRRREDEERN.

The WAC domain maps to 23–131; sequence ETPWVIKESS…DTVCLKTIQK (109 aa). The tract at residues 271–301 is disordered; it reads ELYTPLTIPPESDVEPADWKETSETSETSET. One can recognise a DDT domain in the interval 375-435; it reads QFPTERLLVV…FLKTYNSKGS (61 aa). Residues 673-743 adopt a coiled-coil conformation; sequence CNGIRLKLDS…EDIAFLEAKL (71 aa).

Its subcellular location is the nucleus. May be required for the activity of an ISWI chromatin-remodeling complex. This Saccharomyces cerevisiae (strain ATCC 204508 / S288c) (Baker's yeast) protein is Putative ISWI chromatin-remodeling complex subunit YPL216W.